Consider the following 292-residue polypeptide: Homoserine kinase (292 aa).

Residue 84–94 (PLARGMGSSSA) participates in ATP binding.

The protein belongs to the GHMP kinase family. Homoserine kinase subfamily.

It is found in the cytoplasm. It catalyses the reaction L-homoserine + ATP = O-phospho-L-homoserine + ADP + H(+). Its pathway is amino-acid biosynthesis; L-threonine biosynthesis; L-threonine from L-aspartate: step 4/5. Its function is as follows. Catalyzes the ATP-dependent phosphorylation of L-homoserine to L-homoserine phosphate. The sequence is that of Homoserine kinase from Thermus thermophilus (strain ATCC 27634 / DSM 579 / HB8).